The sequence spans 251 residues: Orotidine 5'-phosphate decarboxylase (251 aa).

Residues Asp-19, Lys-42, 69–78, Thr-133, Arg-194, Gln-204, Gly-224, and Arg-225 each bind substrate; that span reads DLKFHDIPNT. Lys-71 (proton donor) is an active-site residue.

Belongs to the OMP decarboxylase family. Type 1 subfamily. Homodimer.

It carries out the reaction orotidine 5'-phosphate + H(+) = UMP + CO2. It functions in the pathway pyrimidine metabolism; UMP biosynthesis via de novo pathway; UMP from orotate: step 2/2. Catalyzes the decarboxylation of orotidine 5'-monophosphate (OMP) to uridine 5'-monophosphate (UMP). The chain is Orotidine 5'-phosphate decarboxylase from Syntrophus aciditrophicus (strain SB).